Reading from the N-terminus, the 243-residue chain is Large ribosomal subunit protein uL3 (243 aa).

2 disordered regions span residues valine 139–glycine 164 and lysine 218–alanine 243. The residue at position 151 (glutamine 151) is an N5-methylglutamine. Residues lysine 218–aspartate 229 are compositionally biased toward basic and acidic residues. Over residues lysine 230–alanine 243 the composition is skewed to low complexity.

This sequence belongs to the universal ribosomal protein uL3 family. In terms of assembly, part of the 50S ribosomal subunit. Forms a cluster with proteins L14 and L19. Post-translationally, methylated by PrmB.

Functionally, one of the primary rRNA binding proteins, it binds directly near the 3'-end of the 23S rRNA, where it nucleates assembly of the 50S subunit. This Afipia carboxidovorans (strain ATCC 49405 / DSM 1227 / KCTC 32145 / OM5) (Oligotropha carboxidovorans) protein is Large ribosomal subunit protein uL3.